The sequence spans 607 residues: Elongation factor 4 (607 aa).

Residues 11-193 form the tr-type G domain; sequence EKIRNFSIIA…QIVEKVPAPT (183 aa). GTP-binding positions include 23 to 28 and 140 to 143; these read DHGKST and NKID.

It belongs to the TRAFAC class translation factor GTPase superfamily. Classic translation factor GTPase family. LepA subfamily.

It localises to the cell membrane. The enzyme catalyses GTP + H2O = GDP + phosphate + H(+). In terms of biological role, required for accurate and efficient protein synthesis under certain stress conditions. May act as a fidelity factor of the translation reaction, by catalyzing a one-codon backward translocation of tRNAs on improperly translocated ribosomes. Back-translocation proceeds from a post-translocation (POST) complex to a pre-translocation (PRE) complex, thus giving elongation factor G a second chance to translocate the tRNAs correctly. Binds to ribosomes in a GTP-dependent manner. The polypeptide is Elongation factor 4 (Streptococcus pneumoniae (strain Hungary19A-6)).